The following is a 306-amino-acid chain: Homoserine kinase (306 aa).

An ATP-binding site is contributed by 84–94; that stretch reads PAGLGLGSSGA.

The protein belongs to the GHMP kinase family. Homoserine kinase subfamily.

Its subcellular location is the cytoplasm. The enzyme catalyses L-homoserine + ATP = O-phospho-L-homoserine + ADP + H(+). Its pathway is amino-acid biosynthesis; L-threonine biosynthesis; L-threonine from L-aspartate: step 4/5. Functionally, catalyzes the ATP-dependent phosphorylation of L-homoserine to L-homoserine phosphate. The polypeptide is Homoserine kinase (Sulfolobus acidocaldarius (strain ATCC 33909 / DSM 639 / JCM 8929 / NBRC 15157 / NCIMB 11770)).